Here is a 210-residue protein sequence, read N- to C-terminus: Uridine kinase (210 aa).

12-19 contacts ATP; the sequence is GGSGGGKT.

It belongs to the uridine kinase family.

The protein resides in the cytoplasm. It catalyses the reaction uridine + ATP = UMP + ADP + H(+). The catalysed reaction is cytidine + ATP = CMP + ADP + H(+). It functions in the pathway pyrimidine metabolism; CTP biosynthesis via salvage pathway; CTP from cytidine: step 1/3. It participates in pyrimidine metabolism; UMP biosynthesis via salvage pathway; UMP from uridine: step 1/1. The sequence is that of Uridine kinase from Streptococcus uberis (strain ATCC BAA-854 / 0140J).